The chain runs to 111 residues: Large ribosomal subunit protein uL23 (111 aa).

This sequence belongs to the universal ribosomal protein uL23 family. As to quaternary structure, part of the 50S ribosomal subunit. Contacts protein L29, and trigger factor when it is bound to the ribosome.

Its function is as follows. One of the early assembly proteins it binds 23S rRNA. One of the proteins that surrounds the polypeptide exit tunnel on the outside of the ribosome. Forms the main docking site for trigger factor binding to the ribosome. The sequence is that of Large ribosomal subunit protein uL23 from Chlamydia muridarum (strain MoPn / Nigg).